A 235-amino-acid chain; its full sequence is MDLAVELKEGILLVDKPQGRTSFSLIRALTKLIGVKKIGHAGTLDPFATGVMVMLIGRKFTRLSDILLFEDKEYEAIAHLGTTTDSYDCDGKVVGRSKKIPSLEEVLSAAEYFQGEIQQLPPMFSAKKVQGKKLYEYARKGLSIERHHSTVQVHLQITKYEYPLLHFVVSCSKGTYIRSIAHELGTMLGCGAYLEQLRRLRSGRFSIDECIDGNLLDHPDFDISPYLRDAHGNSL.

The active-site Nucleophile is the aspartate 45.

Belongs to the pseudouridine synthase TruB family. Type 1 subfamily.

It carries out the reaction uridine(55) in tRNA = pseudouridine(55) in tRNA. Its function is as follows. Responsible for synthesis of pseudouridine from uracil-55 in the psi GC loop of transfer RNAs. The sequence is that of tRNA pseudouridine synthase B from Chlamydia pneumoniae (Chlamydophila pneumoniae).